Reading from the N-terminus, the 520-residue chain is Developmental regulatory protein wetA (520 aa).

Disordered stretches follow at residues 110–149, 260–294, 388–453, and 471–496; these read ATHA…NERR, HPSS…SWQS, TTSQ…GSNK, and LTGV…RRRK. Over residues 261–294 the composition is skewed to low complexity; it reads PSSSTLTNSSPSSADDMFSSSHSSDPHSLSSWQS. Positions 388 to 401 are enriched in polar residues; the sequence is TTSQVHNVSRSPSL. A compositionally biased stretch (basic residues) spans 420–429; the sequence is PVHRRTHSRK. Residues 436–453 show a composition bias toward low complexity; that stretch reads NAPKPAKASGSSSRGSNK.

Belongs to the wetA family.

BrlA, abaA and wetA are pivotal regulators of conidiophore development and conidium maturation. They act individually and together to regulate their own expression and that of numerous other sporulation-specific genes. Plays a crucial role in pigmentation and conidial cell wall integrity. This chain is Developmental regulatory protein wetA, found in Penicillium digitatum (strain PHI26 / CECT 20796) (Green mold).